Consider the following 429-residue polypeptide: Bifunctional protein GlmU (429 aa).

A pyrophosphorylase region spans residues 1-223 (MKISVLILAA…EQDFMGVNDK (223 aa)). Residues 8 to 11 (LAAG), Lys22, Gln74, and 81 to 82 (GT) each bind UDP-N-acetyl-alpha-D-glucosamine. A Mg(2+)-binding site is contributed by Asp102. Positions 135, 149, 164, and 221 each coordinate UDP-N-acetyl-alpha-D-glucosamine. Asn221 is a binding site for Mg(2+). Residues 224–244 (IELCLAQDLMQEAIKKEWMKQ) are linker. The N-acetyltransferase stretch occupies residues 245 to 429 (GVIFHMPATT…KDYFYTKFKK (185 aa)). Residues Arg308 and Lys325 each coordinate UDP-N-acetyl-alpha-D-glucosamine. The Proton acceptor role is filled by His336. The UDP-N-acetyl-alpha-D-glucosamine site is built by Tyr339 and Asn350. Residues 359 to 360 (NY), Ser378, Ala396, and Arg413 contribute to the acetyl-CoA site.

In the N-terminal section; belongs to the N-acetylglucosamine-1-phosphate uridyltransferase family. The protein in the C-terminal section; belongs to the transferase hexapeptide repeat family. As to quaternary structure, homotrimer. Mg(2+) serves as cofactor.

The protein localises to the cytoplasm. The catalysed reaction is alpha-D-glucosamine 1-phosphate + acetyl-CoA = N-acetyl-alpha-D-glucosamine 1-phosphate + CoA + H(+). The enzyme catalyses N-acetyl-alpha-D-glucosamine 1-phosphate + UTP + H(+) = UDP-N-acetyl-alpha-D-glucosamine + diphosphate. The protein operates within nucleotide-sugar biosynthesis; UDP-N-acetyl-alpha-D-glucosamine biosynthesis; N-acetyl-alpha-D-glucosamine 1-phosphate from alpha-D-glucosamine 6-phosphate (route II): step 2/2. Its pathway is nucleotide-sugar biosynthesis; UDP-N-acetyl-alpha-D-glucosamine biosynthesis; UDP-N-acetyl-alpha-D-glucosamine from N-acetyl-alpha-D-glucosamine 1-phosphate: step 1/1. It participates in bacterial outer membrane biogenesis; LPS lipid A biosynthesis. Catalyzes the last two sequential reactions in the de novo biosynthetic pathway for UDP-N-acetylglucosamine (UDP-GlcNAc). The C-terminal domain catalyzes the transfer of acetyl group from acetyl coenzyme A to glucosamine-1-phosphate (GlcN-1-P) to produce N-acetylglucosamine-1-phosphate (GlcNAc-1-P), which is converted into UDP-GlcNAc by the transfer of uridine 5-monophosphate (from uridine 5-triphosphate), a reaction catalyzed by the N-terminal domain. This chain is Bifunctional protein GlmU, found in Campylobacter lari (strain RM2100 / D67 / ATCC BAA-1060).